The sequence spans 430 residues: Protein POLLENLESS 3-LIKE 2 (430 aa).

The segment at 1-21 (MMRDVFRPTKSAPCSPAKPLG) is disordered. TPR repeat units lie at residues 40–73 (DSPY…GDRV), 74–107 (DSAL…CSDQ), 110–143 (ESLD…IQKG), 170–203 (TRLL…APDN), 205–236 (KMCN…VVDG), and 238–257 (RGVD…LNDL). Residues 81-107 (AIVMKQQNRAEEAIEAIKSLRVRCSDQ) adopt a coiled-coil conformation. The interval 346-376 (KLKRTRSSSQGMGMLSGIGGDHEGETNTSTR) is disordered.

Belongs to the MS5 protein family.

It localises to the nucleus. Probably involved in the regulation of cell division. In Arabidopsis thaliana (Mouse-ear cress), this protein is Protein POLLENLESS 3-LIKE 2.